A 176-amino-acid polypeptide reads, in one-letter code: Oleosin Ara h 14.0101 (176 aa).

Residue Ala-2 is modified to N-acetylalanine; alternate. Transmembrane regions (helical) follow at residues 50–80 and 95–117; these read IIAV…GLAI and AVVT…LTGL. The interval 157 to 176 is disordered; sequence TKDAGQQIQTKAQDVKRSSS.

This sequence belongs to the oleosin family. As to quaternary structure, homodimer. Forms oligomers. In terms of tissue distribution, expressed in seeds (at protein level). Not expressed in leaves.

It localises to the lipid droplet. The protein resides in the membrane. In terms of biological role, may have a structural role to stabilize the lipid body during desiccation of the seed by preventing coalescence of the oil. Probably interacts with both lipid and phospholipid moieties of lipid bodies. May also provide recognition signals for specific lipase anchorage in lipolysis during seedling growth. The protein is Oleosin Ara h 14.0101 of Arachis hypogaea (Peanut).